Here is a 1127-residue protein sequence, read N- to C-terminus: Major DNA-binding protein (1127 aa).

The interval glutamine 1098–leucine 1127 is required for nuclear localization.

Belongs to the herpesviridae major DNA-binding protein family. As to quaternary structure, homooligomers. Forms double-helical filaments necessary for the formation of replication compartments within the host nucleus. Interacts with the origin-binding protein. Interacts with the helicase primase complex; this interaction stimulates primer synthesis activity of the helicase-primase complex. Interacts with the DNA polymerase. Interacts with the alkaline exonuclease; this interaction increases its nuclease processivity.

The protein localises to the host nucleus. Plays several crucial roles in viral infection. Participates in the opening of the viral DNA origin to initiate replication by interacting with the origin-binding protein. May disrupt loops, hairpins and other secondary structures present on ssDNA to reduce and eliminate pausing of viral DNA polymerase at specific sites during elongation. Promotes viral DNA recombination by performing strand-transfer, characterized by the ability to transfer a DNA strand from a linear duplex to a complementary single-stranded DNA circle. Can also catalyze the renaturation of complementary single strands. Additionally, reorganizes the host cell nucleus, leading to the formation of prereplicative sites and replication compartments. This process is driven by the protein which can form double-helical filaments in the absence of DNA. This is Major DNA-binding protein from Alcelaphine herpesvirus 1 (strain C500) (AlHV-1).